The chain runs to 166 residues: Ribosome maturation factor RimM (166 aa).

Positions 94 to 166 (GDEYYWRDLM…EMVVRLLPGL (73 aa)) constitute a PRC barrel domain.

This sequence belongs to the RimM family. As to quaternary structure, binds ribosomal protein uS19.

Its subcellular location is the cytoplasm. Its function is as follows. An accessory protein needed during the final step in the assembly of 30S ribosomal subunit, possibly for assembly of the head region. Essential for efficient processing of 16S rRNA. May be needed both before and after RbfA during the maturation of 16S rRNA. It has affinity for free ribosomal 30S subunits but not for 70S ribosomes. The chain is Ribosome maturation factor RimM from Syntrophus aciditrophicus (strain SB).